The primary structure comprises 696 residues: Rho-related BTB domain-containing protein 1 (696 aa).

Residues 1–210 (MDADMDYERP…DNAIRAALIS (210 aa)) are rho-like. GTP contacts are provided by residues 21-28 (GDNAVGKT), 84-88 (DTFGD), and 140-143 (CQLD). 2 consecutive BTB domains span residues 266–427 (ADVL…DEKE) and 485–552 (SDVT…SPNL). The tract at residues 327–348 (VDPEEEREEGPPRIPQADQWKS) is disordered.

Belongs to the small GTPase superfamily. Rho family. In terms of tissue distribution, ubiquitous, with highest levels in skeletal muscle, placenta, testis, stomach, and kidney, followed by uterus and adrenal gland. Expressed in a variety of fetal tissues.

The protein is Rho-related BTB domain-containing protein 1 (RHOBTB1) of Homo sapiens (Human).